We begin with the raw amino-acid sequence, 692 residues long: Elongation factor G (692 aa).

The tr-type G domain maps to 8–282 (ENTRNIGIMA…AVLDYLPSPL (275 aa)). GTP-binding positions include 17 to 24 (AHIDAGKT), 81 to 85 (DTPGH), and 135 to 138 (NKMD).

The protein belongs to the TRAFAC class translation factor GTPase superfamily. Classic translation factor GTPase family. EF-G/EF-2 subfamily.

It localises to the cytoplasm. Catalyzes the GTP-dependent ribosomal translocation step during translation elongation. During this step, the ribosome changes from the pre-translocational (PRE) to the post-translocational (POST) state as the newly formed A-site-bound peptidyl-tRNA and P-site-bound deacylated tRNA move to the P and E sites, respectively. Catalyzes the coordinated movement of the two tRNA molecules, the mRNA and conformational changes in the ribosome. In Halalkalibacterium halodurans (strain ATCC BAA-125 / DSM 18197 / FERM 7344 / JCM 9153 / C-125) (Bacillus halodurans), this protein is Elongation factor G (fusA).